We begin with the raw amino-acid sequence, 547 residues long: MNKLIRRAVTIFAVTSVASLFASGVLETSMAEFISTNVISLADTKAKDNTSHKSKKARKNHSKETPVNRKKVAPVHESKATGPKQDSCFGRMYTVKVNDDRNVEITQAVPKYATVGSPYPVEITATGKRDCVDVIITQQLPCEAEFVRSDPATTPTADGKLVWKIDRLGQGEKSKITVWVKPLKEGCCFTAATVCACPEIRSVTKCGQPAICVKQEGPENACLRCPVVYKINVVNQGTATARNVVVENPVPDSYAHSSGQRVLTFTLGDMQPGEHRTITVEFCPLKRGRATNIAMVSYCGGHKNTASVTTVINEPCVQVSIAGADWSYVCKPVEYVISVSNPGDLVLRDVVVKDTLSPGVTVLEAAGAQISCNKVVWTVKELNPGESLQYKVLVRAQTPGQFTNNVVVKSCSDCGTCTSCAEATTYWKGVAATHMCVVDTCDPVCVGENTVYRICVTNRGSAEDTNVSLMLKFSKELQPVSFSGPTKGTITGNTVVFDSLPRLGSKETVEFSVTLKAVSAGDARGEAILSSDTLTVPVSDTENTHIY.

The signal sequence occupies residues 1-22; it reads MNKLIRRAVTIFAVTSVASLFA. Positions 45–84 are disordered; it reads KAKDNTSHKSKKARKNHSKETPVNRKKVAPVHESKATGPK. The segment covering 52–61 has biased composition (basic residues); that stretch reads HKSKKARKNH.

In terms of assembly, part of a disulfide cross-linked outer membrane complex (COMC) composed of the major outer membrane porin (MOMP), the small cysteine-rich protein (OmcA) and the large cysteine-rich periplasmic protein (OmcB).

It is found in the periplasm. In terms of biological role, in elementary bodies (EBs, the infectious stage, which is able to survive outside the host cell) provides the structural integrity of the outer envelope through disulfide cross-links with the small cysteine-rich protein and the major outer membrane protein. It has been described in publications as the Sarkosyl-insoluble COMC (Chlamydia outer membrane complex), and serves as the functional equivalent of peptidoglycan. The protein is Large cysteine-rich periplasmic protein OmcB (omcB) of Chlamydia trachomatis serovar L2 (strain ATCC VR-902B / DSM 19102 / 434/Bu).